We begin with the raw amino-acid sequence, 89 residues long: MKLYIAAALLTLGLAAPITETESHSIASRGSFSCPGGLINSSPMCCSVNVLGLLALDCRNVGPDGCVGSSKPNCCTLGTAGQGLICNEM.

The N-terminal stretch at 1–15 is a signal peptide; it reads MKLYIAAALLTLGLA. Disulfide bonds link Cys-34–Cys-74, Cys-45–Cys-66, Cys-46–Cys-58, and Cys-75–Cys-86.

It belongs to the cerato-ulmin hydrophobin family. In terms of assembly, homodimer. Homodimers further self-assemble to form highly ordered films at water-air interfaces through intermolecular interactions.

It is found in the secreted. It localises to the cell wall. In terms of biological role, aerial growth, conidiation, and dispersal of filamentous fungi in the environment rely upon a capability of their secreting small amphipathic proteins called hydrophobins (HPBs) with low sequence identity. Class I can self-assemble into an outermost layer of rodlet bundles on aerial cell surfaces, conferring cellular hydrophobicity that supports fungal growth, development and dispersal; whereas Class II form highly ordered films at water-air interfaces through intermolecular interactions but contribute nothing to the rodlet structure. This Trichoderma asperellum (strain ATCC 204424 / CBS 433.97 / NBRC 101777) protein is Class II hydrophobin 2.